Reading from the N-terminus, the 185-residue chain is Ribosome-recycling factor (185 aa).

It belongs to the RRF family.

Its subcellular location is the cytoplasm. In terms of biological role, responsible for the release of ribosomes from messenger RNA at the termination of protein biosynthesis. May increase the efficiency of translation by recycling ribosomes from one round of translation to another. This Haemophilus influenzae (strain ATCC 51907 / DSM 11121 / KW20 / Rd) protein is Ribosome-recycling factor.